The primary structure comprises 553 residues: Arginine--tRNA ligase (553 aa).

Positions 130–140 (ANPTGDLHIGH) match the 'HIGH' region motif.

It belongs to the class-I aminoacyl-tRNA synthetase family. As to quaternary structure, monomer.

Its subcellular location is the cytoplasm. The enzyme catalyses tRNA(Arg) + L-arginine + ATP = L-arginyl-tRNA(Arg) + AMP + diphosphate. In Staphylococcus aureus (strain MRSA252), this protein is Arginine--tRNA ligase.